Reading from the N-terminus, the 510-residue chain is Gelatinase (510 aa).

Positions 1 to 30 are cleaved as a signal peptide; the sequence is MMKGNKILYILGTGIFVGSSCLFSSLFVAA. The propeptide occupies 31–192; sequence EEQVYSESEV…IMEKQDLTEH (162 aa). Aspartate 324 serves as a coordination point for Ca(2+). Histidine 328 provides a ligand contact to Zn(2+). The active site involves glutamate 329. Residues histidine 332 and glutamate 352 each coordinate Zn(2+). Serine 376 lines the Ca(2+) pocket. Residue histidine 419 is the Proton donor of the active site.

The protein belongs to the peptidase M4 family.

Its subcellular location is the secreted. The enzyme catalyses Preferential cleavage: Xaa-|-Leu, Xaa-|-Phe, Xaa-|-Tyr, Xaa-|-Ala.. With respect to regulation, inhibited by L-leucine hydroxamate and phosphoramidon. Not inhibited by phenylmethanesulfonyl fluoride. Reversibly inactivated by straight-chain aliphatic alcohols. In terms of biological role, metalloprotease capable of the hydrolysis of insoluble hydrophobic substrates. Hydrolyzes azocoll and gelatin and, at a lower rate, soluble and insoluble collagens. Does not cleave short synthetic peptides. Preferentially hydrolyzes the 24-Phe-|-Phe-25 bond in the insulin B-chain, followed by the 5-His-|-Leu-6 bond. Inactivates endothelin-1, primarily by cleavage of the 5-Ser-|-Leu-6 and 16-His-|-Leu-17 bonds. Hydrolyzes the alpha chain of C3 to generate a C3b-like protein. Inhibits complement-mediated hemolysis and opsinization of bacteria. Hydrolyzes the insect antimicrobial peptide cecropin. Decreases the length of E.faecalis chains via the activation of autolysin. Degrades polymerized fibrin. The polypeptide is Gelatinase (Enterococcus faecalis (strain ATCC 700802 / V583)).